Reading from the N-terminus, the 459-residue chain is Ribulose bisphosphate carboxylase large chain (459 aa).

N6,N6,N6-trimethyllysine is present on Lys4. Residues Asn113 and Thr163 each coordinate substrate. Catalysis depends on Lys165, which acts as the Proton acceptor. Substrate is bound at residue Lys167. Mg(2+)-binding residues include Lys191, Asp193, and Glu194. Lys191 is modified (N6-carboxylysine). Residue His284 is the Proton acceptor of the active site. Substrate is bound by residues Arg285, His317, and Ser369.

The protein belongs to the RuBisCO large chain family. Type I subfamily. As to quaternary structure, heterohexadecamer of 8 large chains and 8 small chains; disulfide-linked. The disulfide link is formed within the large subunit homodimers. It depends on Mg(2+) as a cofactor. Post-translationally, the disulfide bond which can form in the large chain dimeric partners within the hexadecamer appears to be associated with oxidative stress and protein turnover.

The protein resides in the plastid. Its subcellular location is the chloroplast. It carries out the reaction 2 (2R)-3-phosphoglycerate + 2 H(+) = D-ribulose 1,5-bisphosphate + CO2 + H2O. It catalyses the reaction D-ribulose 1,5-bisphosphate + O2 = 2-phosphoglycolate + (2R)-3-phosphoglycerate + 2 H(+). In terms of biological role, ruBisCO catalyzes two reactions: the carboxylation of D-ribulose 1,5-bisphosphate, the primary event in carbon dioxide fixation, as well as the oxidative fragmentation of the pentose substrate in the photorespiration process. Both reactions occur simultaneously and in competition at the same active site. This is Ribulose bisphosphate carboxylase large chain from Nypa fruticans (Nypa palm).